The sequence spans 266 residues: Integral membrane protein 2B (266 aa).

At 1–54 (MVKVTFNSALAQKEAKKDEPKSGEEALIIPPDAVAVDCKDPDDVVPVGQRRAWC) the chain is on the cytoplasmic side. The chain crosses the membrane as a helical; Signal-anchor for type II membrane protein span at residues 55–75 (WCMCFGLAFMLAGVILGGAYL). Residues 76-266 (YKYFALQPDD…KFAVETLICS (191 aa)) lie on the Lumenal side of the membrane. The segment at 102 to 134 (EPSADAPAALYQTIEENIKIFEEEEVEFISVPV) is necessary for interaction with APP and inhibitor effects on APP processing. The BRICHOS domain occupies 137–231 (FADSDPANIV…LCHDKETYKL (95 aa)). 2 cysteine pairs are disulfide-bonded: C164–C223 and C248–C265. N-linked (GlcNAc...) asparagine glycosylation is present at N170.

This sequence belongs to the ITM2 family. As to quaternary structure, homodimer; disulfide-linked. Interacts with SPPL2A and SPPL2B. Interacts with APP. Mature BRI2 (mBRI2) interacts with the APP amyloid-beta A4 protein; the interaction occurs at the cell surface and in the endocytic compartments and enable alpha- and beta-secretase-induced APP cleavage inhibition. Mature BRI2 (mBRI2) interacts with the APP C99; the interaction occurs in the endocytic compartments and enable gamma-secretase-induced C99 cleavage inhibition. May form heterodimers with Bri23 peptide and APP amyloid-beta protein 40. Interacts with ADAM7 in sperm; the interaction increases following capacitation. Post-translationally, the ectodomain C-terminal part of the imBRI2 is processed by furin producing a secreted Bri23 peptide and a mature BRI2, membrane form (mBRI2). The remaining part of the ectodomain of mBRI2 containing the BRICHOS domain is cleaved by ADAM10 and is secreted (BRI2C, soluble form). The membrane-bound N-terminal fragment (BRI2C, membrane form) is further proteolytically processed by SPPL2A and SPPL2B through regulated intramembrane proteolysis producing a secreted C-peptide and a BRI2 intracellular domain (BRI2 ICD) released in the cytosol. Shedding by ADAM10 facilitates intramembrane cleavage but is not absolutely required for BRI2 ICD generation. Glycosylation at Asn-170 is important for cell surface localization, but doesn't affect furin- and ADAM10-induced proteolytic processing. As to expression, ubiquitous. Expressed in brain.

It localises to the golgi apparatus membrane. The protein localises to the cell membrane. Its subcellular location is the endosome membrane. The protein resides in the secreted. In terms of biological role, plays a regulatory role in the processing of the amyloid-beta A4 precursor protein (APP) and acts as an inhibitor of the amyloid-beta peptide aggregation and fibrils deposition. Plays a role in the induction of neurite outgrowth. Functions as a protease inhibitor by blocking access of secretases to APP cleavage sites. Mature BRI2 (mBRI2) functions as a modulator of the amyloid-beta A4 precursor protein (APP) processing leading to a strong reduction in the secretion of secretase-processed amyloid-beta protein 40 and amyloid-beta protein 42. Functionally, bri23 peptide prevents aggregation of APP amyloid-beta protein 42 into toxic oligomers. This Homo sapiens (Human) protein is Integral membrane protein 2B (ITM2B).